We begin with the raw amino-acid sequence, 1368 residues long: DNA-directed RNA polymerase subunit beta (1368 aa).

This sequence belongs to the RNA polymerase beta chain family. The RNAP catalytic core consists of 2 alpha, 1 beta, 1 beta' and 1 omega subunit. When a sigma factor is associated with the core the holoenzyme is formed, which can initiate transcription.

It carries out the reaction RNA(n) + a ribonucleoside 5'-triphosphate = RNA(n+1) + diphosphate. In terms of biological role, DNA-dependent RNA polymerase catalyzes the transcription of DNA into RNA using the four ribonucleoside triphosphates as substrates. The chain is DNA-directed RNA polymerase subunit beta from Paraburkholderia xenovorans (strain LB400).